Consider the following 1417-residue polypeptide: MVSFFKTPIFILIIFLYLNEKVICSINENQNENDTISQNVNQHENINQNVNDNDNIEQLKSMIGNDELHKNLTILEKLILESLEKDKLKYPLLKQGTEQLIDISKFNKKNITDADDETYIIPTVQSTFHDIVKYEHLIKEQSIEIYNSDISDKIKKKIFIVRTLKTIKLMLIPLNSYKQNNDLKSALEELNNVFTNKEAQEESSPIGDHGTFFRKLLTHVRTIKENEDIENKGETLILGDNKIDVMNSNDFFFTTNSNVKFMENLDDITNQYGLGLINHLGPHLIALGHFTVLKLALKNYKNYFEAKSIKFFSWQKILEFSMSDRFKVLDMMCDHESVYYSEKKRRKTYLKVDRSNTSMECNILEYLLHYFNKYQLEIIKTTQDTDFDLHGMMEHKYIKDYFFSFMCNDPKECIIYHTNQFKKEANEENTFPEQEEPNRQISAFNLYLNYYYFMKRYSSYGVKKTLYVHLLNLTGLLNYDTRAYVTSLYLPGYYNAVEMSFTEEKEFSKLFESLIQCIEKCHSDQARQISKDSNLLNNITKCDLCKGAFLYANMKFDEVPSMLQKFYVYLTKGLKIQKVSSLIKTLDIYQDYSNYLSHDINWYTFLFLFRLTSFKEIAKKNVAEAMYLNIKDEDTFNKTVVTNYWYPSPIKKYYTLYVRKHIPNNLVDELEKLMKSGTLEKMKKSLTFLVHVNSFLQLDFFHQLNEPPLGLPRSYPLSLVLEHKFKEWMNSSPAGFYFSNYQNPYIRKDLHDKVLSQKFEPPKMNQWNKVLKSLIECAYDMYFEQRHVKNLYKYHNIYNINNKLMLMRDSIDLYKNNFDDVLFFADIFNMRKYMTATPVYKKVKDRVYHTLHSITGNSVNFYKYGIIYGFKVNKEILKEVVDELYSIYNFNTDIFTDTSFLQTVYLLFRRIEETYRTQRRDDKISVNNVFFMNVANNYSKLNKEEREIEIHNSMASRYYAKTMFAAFQMLFSTMLSNNVDNLDKAYGLSENIQVATSTSAFLTFAYVYNGSIMDSVTNSLLPPYAKKPITQLKYGKTFVFSNYFMLASKMYDMLNYKNLSLLCEYQAVASANFYSAKKVGQFLGRKFLPITTYFLVMRISWTHAFTTGQHLISAFGSPSSTANGKSNASGYKSPESFFFTHGLAAEASKYLFFYFFTNLYLDAYKSFPGGFGPAIKEQTQHVQEQTYERKPSVHSFNRNFFMELVNGFMYAFCFFAISQMYAYFENINFYITSNFRFLDRYYGVFNKYFINYAIIKLKEITSDLLIKYEREAYLSMKKYGYLGEVIAARLSPKDKIMNYVHETNEDIMSNLRRYDMENAFKNKMSTYVDDFAFFDDCGKNEQFLNERCDYCPVIEEVEETQLFTTTGDKNTNKTTEIKKQTSTYIDTEKMNEADSADSDDEKDSDTPDDELMISRFH.

The N-terminal stretch at 1-24 (MVSFFKTPIFILIIFLYLNEKVIC) is a signal peptide. Intrachain disulfides connect Cys-333/Cys-361, Cys-407/Cys-413, Cys-517/Cys-545, and Cys-521/Cys-542. A helical transmembrane segment spans residues 1204–1224 (LVNGFMYAFCFFAISQMYAYF). The disordered stretch occupies residues 1383–1417 (TYIDTEKMNEADSADSDDEKDSDTPDDELMISRFH). Positions 1394–1411 (DSADSDDEKDSDTPDDEL) are enriched in acidic residues.

In terms of assembly, self-associates. Component of the RhopH complex. RhopH complex is at least composed of CLAG3.1/CLAG3.2, RhopH2 and RhopH3 with a 1:1:1 subunit stoichiometry. CLAG3.1/CLAG3.2 mediates subunit association through independent contacts with RhopH2 and RhopH3, which do not directly interact with one another. Interacts with RhopH2. Interacts with RhopH3.

It localises to the host cell membrane. The protein resides in the host cytoplasm. Its subcellular location is the cytoplasmic vesicle. It is found in the secretory vesicle. The protein localises to the rhoptry. Functionally, participates in the formation of new permeability pathways in Plasmodium-infected erythrocytes enabling the uptake of nutrients from the blood plasma. This Plasmodium falciparum (isolate 3D7) protein is Cytoadherence-linked asexual protein 3.1.